Reading from the N-terminus, the 449-residue chain is Aspartyl protease AED3 (449 aa).

The N-terminal stretch at 1–23 (MASSSLHFFFFLTLLLPFTFTTA) is a signal peptide. The 341-residue stretch at 104 to 444 (YVVRAKLGTP…DVPNSRIGIA (341 aa)) folds into the Peptidase A1 domain. The active site involves D122. C132 and C138 form a disulfide bridge. N140, N148, N184, N211, and N297 each carry an N-linked (GlcNAc...) asparagine glycan. The active site involves D328. N353 carries an N-linked (GlcNAc...) asparagine glycan. A disulfide bond links C366 and C405.

Belongs to the peptidase A1 family.

It is found in the secreted. It localises to the extracellular space. Its subcellular location is the apoplast. In Arabidopsis thaliana (Mouse-ear cress), this protein is Aspartyl protease AED3.